We begin with the raw amino-acid sequence, 820 residues long: Cation/H(+) antiporter 17 (820 aa).

The next 12 helical transmembrane spans lie at 30–50 (LPLL…LAFL), 58–75 (RVIA…SALG), 90–110 (LTVL…LVGL), 124–144 (ALSI…GTSF), 159–179 (FLVF…ARIL), 192–212 (IALS…ALAV), 222–242 (LTSL…IFVV), 276–296 (FVTD…GVIF), 313–333 (LVSG…TNVA), 342–362 (GLLV…TVLV), 374–394 (LALG…LNIG), and 404–424 (IFAI…PLVL). 2 positions are modified to phosphoserine: Ser-817 and Ser-819.

Belongs to the monovalent cation:proton antiporter 2 (CPA2) transporter (TC 2.A.37) family. CHX (TC 2.A.37.4) subfamily. As to expression, predominantly expressed in epidermal and cortical cells of mature roots but also barely detected in leaves.

It is found in the membrane. Operates as a K(+)/H(+) antiporter that controls K(+) acquisition and homeostasis. The chain is Cation/H(+) antiporter 17 (CHX17) from Arabidopsis thaliana (Mouse-ear cress).